The primary structure comprises 274 residues: 4-hydroxy-3-methylbut-2-enyl diphosphate reductase (274 aa).

Cysteine 12 lines the [4Fe-4S] cluster pocket. (2E)-4-hydroxy-3-methylbut-2-enyl diphosphate-binding residues include histidine 36 and histidine 70. Residues histidine 36 and histidine 70 each contribute to the dimethylallyl diphosphate site. Isopentenyl diphosphate is bound by residues histidine 36 and histidine 70. Cysteine 92 contributes to the [4Fe-4S] cluster binding site. Residue histidine 120 coordinates (2E)-4-hydroxy-3-methylbut-2-enyl diphosphate. Dimethylallyl diphosphate is bound at residue histidine 120. Histidine 120 lines the isopentenyl diphosphate pocket. The active-site Proton donor is glutamate 122. Threonine 158 is a binding site for (2E)-4-hydroxy-3-methylbut-2-enyl diphosphate. Cysteine 186 lines the [4Fe-4S] cluster pocket. The (2E)-4-hydroxy-3-methylbut-2-enyl diphosphate site is built by serine 214, serine 215, asparagine 216, and serine 258. Residues serine 214, serine 215, asparagine 216, and serine 258 each coordinate dimethylallyl diphosphate. 4 residues coordinate isopentenyl diphosphate: serine 214, serine 215, asparagine 216, and serine 258.

It belongs to the IspH family. The cofactor is [4Fe-4S] cluster.

It carries out the reaction isopentenyl diphosphate + 2 oxidized [2Fe-2S]-[ferredoxin] + H2O = (2E)-4-hydroxy-3-methylbut-2-enyl diphosphate + 2 reduced [2Fe-2S]-[ferredoxin] + 2 H(+). The catalysed reaction is dimethylallyl diphosphate + 2 oxidized [2Fe-2S]-[ferredoxin] + H2O = (2E)-4-hydroxy-3-methylbut-2-enyl diphosphate + 2 reduced [2Fe-2S]-[ferredoxin] + 2 H(+). It participates in isoprenoid biosynthesis; dimethylallyl diphosphate biosynthesis; dimethylallyl diphosphate from (2E)-4-hydroxy-3-methylbutenyl diphosphate: step 1/1. Its pathway is isoprenoid biosynthesis; isopentenyl diphosphate biosynthesis via DXP pathway; isopentenyl diphosphate from 1-deoxy-D-xylulose 5-phosphate: step 6/6. Its function is as follows. Catalyzes the conversion of 1-hydroxy-2-methyl-2-(E)-butenyl 4-diphosphate (HMBPP) into a mixture of isopentenyl diphosphate (IPP) and dimethylallyl diphosphate (DMAPP). Acts in the terminal step of the DOXP/MEP pathway for isoprenoid precursor biosynthesis. The protein is 4-hydroxy-3-methylbut-2-enyl diphosphate reductase of Campylobacter curvus (strain 525.92).